The following is a 2575-amino-acid chain: Non-reducing polyketide synthase pks11 (2575 aa).

The region spanning 89 to 228 (LANIILSPLV…ASKTVSTLQG (140 aa)) is the Starter acyltransferase (SAT) domain. Catalysis depends on Cys129, which acts as the Nucleophile; for transacylase activity. The active-site Proton donor/acceptor; for transacylase activity is the His247. The Ketosynthase family 3 (KS3) domain occupies 373–790 (EDDIAVVGMS…GSNASAVVTE (418 aa)). Active-site for beta-ketoacyl synthase activity residues include Cys538, His673, and His713. The Malonyl-CoA:ACP transacylase (MAT) domain occupies 901–1192 (FGGQISTYVG…TNMASRALGS (292 aa)). The segment at 1276 to 1409 (PKGLWSFIDY…GQIIFVSTDN (134 aa)) is N-terminal hotdog fold. In terms of domain architecture, PKS/mFAS DH spans 1276–1586 (PKGLWSFIDY…YHKVAKATMS (311 aa)). The segment at 1307–1584 (LVSGHIIAQT…VNYHKVAKAT (278 aa)) is product template (PT) domain. Catalysis depends on His1311, which acts as the Proton acceptor; for dehydratase activity. Residues 1437–1586 (ADDIIQGRNI…YHKVAKATMS (150 aa)) form a C-terminal hotdog fold region. The active-site Proton donor; for dehydratase activity is the Asp1493. Residues 1597–1606 (TTSTSTNVKS) show a composition bias toward polar residues. The segment at 1597 to 1636 (TTSTSTNVKSSPAAAEGSSPVENGASGSGSKAKKTKSGAG) is disordered. In terms of domain architecture, Carrier spans 1637–1711 (QDVVNKTKGL…GLVQIIKSTL (75 aa)). Ser1671 bears the O-(pantetheine 4'-phosphoryl)serine mark. The disordered stretch occupies residues 1713–1762 (VSDDEEGSDQEGSEASSSESSTTFTPSTTATTVSDVEDNGNEKSIGKEKS). A compositionally biased stretch (acidic residues) spans 1714–1724 (SDDEEGSDQEG). The span at 1725–1746 (SEASSSESSTTFTPSTTATTVS) shows a compositional bias: low complexity. The span at 1752 to 1762 (GNEKSIGKEKS) shows a compositional bias: basic and acidic residues. Positions 1835-2130 (LTRIPHDPQH…HIDWTDGNSP (296 aa)) are methyltransferase domain. The Thioester reductase (TE) domain maps to 2204–2448 (ITGATGSLGS…LCWTPVDDVA (245 aa)).

Pantetheine 4'-phosphate is required as a cofactor.

Its pathway is secondary metabolite biosynthesis. Non-reducing polyketide synthase; part of the gene cluster that mediates the biosynthesis of mitorubrinol and mitorubrinic acid, two virulence factors that improve T.marneffei intracellular survival in macrophages. The two polyketide synthases pks12 and pks11 are probably responsible for sequential use in the biosynthesis of mitorubrinol and mitorubrinic acid. The first part of the biosynthesis is probably catalyzed by pks12, which synthesized orsellinic acid. This tetraketide is then used as a starter unit for pks11, which possesses a SAT domain, in the second part of the biosynthesis. Pks11, contains a methyltransferase domain, also served that methylates the products, using a methyl group from S-adenosylmethionine. This Talaromyces marneffei (Penicillium marneffei) protein is Non-reducing polyketide synthase pks11.